We begin with the raw amino-acid sequence, 193 residues long: SCO1 protein homolog (193 aa).

The first 18 residues, 1–18, serve as a signal peptide directing secretion; it reads MKVIKGLTAGLIFLFLCA. The N-palmitoyl cysteine moiety is linked to residue cysteine 19. A lipid anchor (S-diacylglycerol cysteine) is attached at cysteine 19. Residues 26–191 form the Thioredoxin domain; it reads DPLNYEVEPF…IISDVKSAST (166 aa). The Cu cation site is built by cysteine 64, cysteine 68, and histidine 154.

It belongs to the SCO1/2 family. In terms of assembly, monomer.

It localises to the cell membrane. Functionally, necessary for insertion of copper into the active site of cytochrome c oxidase. May play a role in copper homeostasis or redox signaling. This chain is SCO1 protein homolog (ypmQ), found in Bacillus subtilis (strain 168).